The chain runs to 280 residues: Undecaprenyl-diphosphatase (280 aa).

The next 8 membrane-spanning stretches (helical) occupy residues 2-22, 45-65, 86-106, 114-134, 147-167, 188-208, 223-243, and 255-275; these read FIIE…TEWL, AFME…VVVI, WQLW…GLFL, FYNL…FIYL, LASL…LALF, SVVT…ASGW, GQIF…LVVI, and FTIF…YAAI.

This sequence belongs to the UppP family.

It localises to the cell membrane. It catalyses the reaction di-trans,octa-cis-undecaprenyl diphosphate + H2O = di-trans,octa-cis-undecaprenyl phosphate + phosphate + H(+). In terms of biological role, catalyzes the dephosphorylation of undecaprenyl diphosphate (UPP). Confers resistance to bacitracin. This Streptococcus sanguinis (strain SK36) protein is Undecaprenyl-diphosphatase.